A 288-amino-acid polypeptide reads, in one-letter code: Bifunctional protein FolD (288 aa).

Residues 166–168 (GAS) and I232 each bind NADP(+).

Belongs to the tetrahydrofolate dehydrogenase/cyclohydrolase family. As to quaternary structure, homodimer.

The enzyme catalyses (6R)-5,10-methylene-5,6,7,8-tetrahydrofolate + NADP(+) = (6R)-5,10-methenyltetrahydrofolate + NADPH. It catalyses the reaction (6R)-5,10-methenyltetrahydrofolate + H2O = (6R)-10-formyltetrahydrofolate + H(+). Its pathway is one-carbon metabolism; tetrahydrofolate interconversion. Catalyzes the oxidation of 5,10-methylenetetrahydrofolate to 5,10-methenyltetrahydrofolate and then the hydrolysis of 5,10-methenyltetrahydrofolate to 10-formyltetrahydrofolate. The polypeptide is Bifunctional protein FolD (Erwinia tasmaniensis (strain DSM 17950 / CFBP 7177 / CIP 109463 / NCPPB 4357 / Et1/99)).